The following is a 1430-amino-acid chain: DNA-directed RNA polymerase subunit beta' (1430 aa).

Residues Cys-70, Cys-72, Cys-85, and Cys-88 each contribute to the Zn(2+) site. Mg(2+) contacts are provided by Asp-495, Asp-497, and Asp-499. Residues Cys-838, Cys-912, Cys-919, and Cys-922 each contribute to the Zn(2+) site.

The protein belongs to the RNA polymerase beta' chain family. In terms of assembly, the RNAP catalytic core consists of 2 alpha, 1 beta, 1 beta' and 1 omega subunit. When a sigma factor is associated with the core the holoenzyme is formed, which can initiate transcription. The cofactor is Mg(2+). Zn(2+) serves as cofactor.

The enzyme catalyses RNA(n) + a ribonucleoside 5'-triphosphate = RNA(n+1) + diphosphate. Its function is as follows. DNA-dependent RNA polymerase catalyzes the transcription of DNA into RNA using the four ribonucleoside triphosphates as substrates. This is DNA-directed RNA polymerase subunit beta' from Rhodospirillum centenum (strain ATCC 51521 / SW).